The chain runs to 102 residues: Small ribosomal subunit protein uS10 (102 aa).

The protein belongs to the universal ribosomal protein uS10 family. As to quaternary structure, part of the 30S ribosomal subunit.

Functionally, involved in the binding of tRNA to the ribosomes. The sequence is that of Small ribosomal subunit protein uS10 from Mesoplasma florum (strain ATCC 33453 / NBRC 100688 / NCTC 11704 / L1) (Acholeplasma florum).